Here is a 422-residue protein sequence, read N- to C-terminus: Regulator of sigma-W protease RasP (422 aa).

4 helical membrane passes run 6–26, 175–195, 346–366, and 394–414; these read VIAFIIIFGTLVFFHELGHLL, IAAGPIMNFILAYVILVMLGL, IVNLFQFAAFLSINLGIVNLL, and EAFVVFIGVAFLMLLMLVVTW. Residue histidine 20 participates in Zn(2+) binding. The active site involves glutamate 21. Residue histidine 24 participates in Zn(2+) binding. One can recognise a PDZ domain in the interval 186-271; the sequence is AYVILVMLGL…TLHISVTPEA (86 aa).

Belongs to the peptidase M50B family. It depends on Zn(2+) as a cofactor.

Its subcellular location is the cell membrane. In terms of biological role, is responsible for site-2 cleavage of the RsiW anti-sigma factor. This results, after a third proteolytic step catalyzed by the ClpXP protease, in the release of SigW and the transcription activation of the genes under the control of the sigma-W factor. Can also cleave liberated signal peptides of PenP and Mpr, probably within in the cell membrane. In Bacillus subtilis (strain 168), this protein is Regulator of sigma-W protease RasP.